The primary structure comprises 866 residues: Paramyosin (866 aa).

The nonhelical region stretch occupies residues 1 to 22 (MMNHDTESHVKISRTIYRGVSP). The stretch at 23-839 (STTRLESRVR…AERTVTVRRV (817 aa)) forms a coiled coil. Residues 840–866 (GPGGRAVSVARELSVTSNRGMRATSMM) are nonhelical region.

This sequence belongs to the paramyosin family. Homodimer.

Its subcellular location is the cytoplasm. The protein resides in the myofibril. Functionally, paramyosin is a major structural component of many thick filaments isolated from invertebrate muscles. The sequence is that of Paramyosin from Schistosoma japonicum (Blood fluke).